We begin with the raw amino-acid sequence, 95 residues long: Small ribosomal subunit protein uS19 (95 aa).

The segment at 76–95 (PTRRFGGHADKKAKKGELKK) is disordered. A compositionally biased stretch (basic and acidic residues) spans 82–95 (GHADKKAKKGELKK).

It belongs to the universal ribosomal protein uS19 family.

Functionally, protein S19 forms a complex with S13 that binds strongly to the 16S ribosomal RNA. The protein is Small ribosomal subunit protein uS19 (rpsS) of Thermotoga maritima (strain ATCC 43589 / DSM 3109 / JCM 10099 / NBRC 100826 / MSB8).